We begin with the raw amino-acid sequence, 326 residues long: ATP synthase subunit gamma, mitochondrial (326 aa).

The transit peptide at 1 to 45 (MAMAALRREGRRLAAAPFTSPTPLNALRSSLVSPSEEIGLSGVRS) directs the protein to the mitochondrion.

This sequence belongs to the ATPase gamma chain family. F-type ATPases have 2 components, CF(1) - the catalytic core - and CF(0) - the membrane proton channel. CF(1) has five subunits: alpha(3), beta(3), gamma(1), delta(1), epsilon(1). CF(0) has three main subunits: a, b and c.

It is found in the mitochondrion. It localises to the mitochondrion inner membrane. Its function is as follows. Mitochondrial membrane ATP synthase (F(1)F(0) ATP synthase or Complex V) produces ATP from ADP in the presence of a proton gradient across the membrane which is generated by electron transport complexes of the respiratory chain. F-type ATPases consist of two structural domains, F(1) - containing the extramembraneous catalytic core, and F(0) - containing the membrane proton channel, linked together by a central stalk and a peripheral stalk. During catalysis, ATP synthesis in the catalytic domain of F(1) is coupled via a rotary mechanism of the central stalk subunits to proton translocation. Part of the complex F(1) domain and the central stalk which is part of the complex rotary element. The gamma subunit protrudes into the catalytic domain formed of alpha(3)beta(3). Rotation of the central stalk against the surrounding alpha(3)beta(3) subunits leads to hydrolysis of ATP in three separate catalytic sites on the beta subunits. The polypeptide is ATP synthase subunit gamma, mitochondrial (ATPC) (Ipomoea batatas (Sweet potato)).